The following is a 480-amino-acid chain: Type II methyltransferase M.NspV (480 aa).

It belongs to the methyltransferase superfamily.

In terms of biological role, a gamma subtype methylase that recognizes the double-stranded sequence 5'-TTCGAA-3', and methylates it on an unknown base to protect it against the NspV endonuclease. The sequence is that of Type II methyltransferase M.NspV from Nostoc sp. (strain ATCC 29411 / PCC 7524).